Here is a 1257-residue protein sequence, read N- to C-terminus: MAKKFNYKLPSMVALTLVGSAVTAHQVQAAETTQDQTTNKNVLDSNKVKATTEQAKAEVKNPTQNISGTQVYQDPAIVQPKAANKTGNAQVNQKVDTTQVNGDTRATQSTTSNNAKPVTKSTNTTAPKTNNNVTSAGYSLVDDEDDNSENQINPELIKSAAKPAALETQYKAAAPKATPVAPKAKTEATPKVTTFSASAQPRSAAAAPKTSLPKYKPQVNSSINDYIRKNNLKAPKIEEDYTSYFPKYAYRNGVGRPEGIVVHDTANDRSTINGEISYMKNNYQNAFVHAFVDGDRIIETAPTDYLSWGVGAVGNPRFINVEIVHTHDYASFARSMNNYADYAATQLQYYGLKPDSAEYDGNGTVWTHYAVSKYLGGTDHADPHGYLRSHNYSYDQLYDLINEKYLIKMGKVAPWGTQSTTTPTTPSKPSTPSKPSTPSTGKLTVAANNGVAQIKPTNSGLYTTVYDKTGKATNEVQKTFAVSKTATLGNQKFYLVQDYNSGNKFGWVKEGDVVYNTAKSPVNVNQSYSIKPGTKLYTVPWGTSKQVAGSVSGSGNQTFKASKQQQIDKSIYLYGSVNGKSGWVSKAYLVDTAKPTPTPTPKPSTPTTNNKLTVSSLNGVAQINAKNNGLFTTVYDKTGKPTKEVQKTFAVTKEASLGGNKFYLVKDYNSPTLIGWVKQGDVIYNNAKSPVNVMQTYTVKPGTKLYSVPWGTYKQEAGAVSGTGNQTFKATKQQQIDKSIYLYGTVNGKSGWISKAYLAVPAAPKKAVAQPKTAVKAYAVTKPQTTQTVSKIAQVKPNNTGIRASVYEKTAKNGAKYADRTFYVTKERAHGNETYVLLNNTSHNIPLGWFNVKDLNVQNLGKEVKTTQKYTVNRSNNGLSMVPWGTKNQVILTGNNIAQGTFNATKQVSVGKDVYLYGTINNRTGWVNSKDLTAPTAVKPTTSAAKDYNYTYVIKNGNGYYYVTPNSDTAKYSLKAFNEQPFAVVKEQVINGQTWYYGKLSNGKLAWIKSTDLAKELIKYNQIGMTLNQVAQIQAGLQYKPQVQRVPGKWTDANFNDVKHAMDTKRLAQDPALKYQFLRLDQPQNISIDKINQFLKGKGVLENQGAAFNKAAQMYGINEVYLISHALLETGNGTSQLAKGADVVNNKVVTNSNTKYHNVFGIAAYDNDPLREGIKYAKQAGWDTVSKAIVGGAKFIGNSYVKAGQNTLYKMRWNPAHPGTHQYATDVDWANINAKIIKGYYDKIGEVGKYFDIPQYK.

Positions 1 to 29 are cleaved as a signal peptide; it reads MAKKFNYKLPSMVALTLVGSAVTAHQVQA. Over residues 99-137 the composition is skewed to polar residues; the sequence is QVNGDTRATQSTTSNNAKPVTKSTNTTAPKTNNNVTSAG. 3 disordered regions span residues 99–150, 173–217, and 417–441; these read QVNG…NSEN, AAPK…KYKP, and TQSTTTPTTPSKPSTPSKPSTPSTG. Low complexity-rich tracts occupy residues 173 to 208 and 419 to 440; these read AAPKATPVAPKAKTEATPKVTTFSASAQPRSAAAAP and STTTPTTPSKPSTPSKPSTPST. The interval 197 to 776 is N-acetylmuramoyl-L-alanine amidase; it reads ASAQPRSAAA…AVAQPKTAVK (580 aa). GW domains follow at residues 444-518, 520-594, 613-687, 689-763, 785-860, 862-937, and 944-1018; these read TVAA…YNTA, SPVN…DTAK, TVSS…YNNA, SPVN…VPAA, TTQT…VQNL, KEVK…APTA, and AAKD…KELI. The tract at residues 777-1257 is endo-beta-N-acetylglucosaminidase; it reads AYAVTKPQTT…GKYFDIPQYK (481 aa).

The protein in the N-terminal section; belongs to the N-acetylmuramoyl-L-alanine amidase 2 family. This sequence in the C-terminal section; belongs to the glycosyl hydrolase 73 family. Oligomer; forms a ring structure at the cell surface which is important for efficient partitioning of daughter cells after cell division. Undergoes proteolytic processing to generate the two extracellular lytic enzymes, probably at the septal region on the cell surface.

Its subcellular location is the secreted. It catalyses the reaction Hydrolyzes the link between N-acetylmuramoyl residues and L-amino acid residues in certain cell-wall glycopeptides.. The enzyme catalyses an N(4)-(oligosaccharide-(1-&gt;3)-[oligosaccharide-(1-&gt;6)]-beta-D-Man-(1-&gt;4)-beta-D-GlcNAc-(1-&gt;4)-alpha-D-GlcNAc)-L-asparaginyl-[protein] + H2O = an oligosaccharide-(1-&gt;3)-[oligosaccharide-(1-&gt;6)]-beta-D-Man-(1-&gt;4)-D-GlcNAc + N(4)-(N-acetyl-beta-D-glucosaminyl)-L-asparaginyl-[protein]. Its function is as follows. Endohydrolysis of the di-N-acetylchitobiosyl unit in high-mannose glycopeptides and glycoproteins containing the -[(Man)5(GlcNAc)2]-Asn structure. One N-acetyl-D-glucosamine residue remains attached to the protein; the rest of the oligosaccharide is released intact. Cleaves the peptidoglycan connecting the daughter cells at the end of the cell division cycle, resulting in the separation of the two newly divided cells. Acts as an autolysin in penicillin-induced lysis. This Staphylococcus aureus (strain MRSA252) protein is Bifunctional autolysin (atl).